The chain runs to 243 residues: Ribonuclease 3 (243 aa).

The RNase III domain maps to 19–144 (FNTLHKLLGF…LVGAIYLDRG (126 aa)). Glu-61 is a binding site for Mg(2+). Asp-65 is a catalytic residue. Positions 130 and 133 each coordinate Mg(2+). Glu-133 is a catalytic residue. Residues 172–240 (SYKSLLIEWC…SKRAYYALQN (69 aa)) form the DRBM domain.

It belongs to the ribonuclease III family. As to quaternary structure, homodimer. Mg(2+) serves as cofactor.

It is found in the cytoplasm. It carries out the reaction Endonucleolytic cleavage to 5'-phosphomonoester.. In terms of biological role, digests double-stranded RNA. Involved in the processing of primary rRNA transcript to yield the immediate precursors to the large and small rRNAs (23S and 16S). Processes some mRNAs, and tRNAs when they are encoded in the rRNA operon. Processes pre-crRNA and tracrRNA of type II CRISPR loci if present in the organism. The polypeptide is Ribonuclease 3 (rnc) (Zunongwangia profunda (strain DSM 18752 / CCTCC AB 206139 / SM-A87) (Wangia profunda)).